Here is a 141-residue protein sequence, read N- to C-terminus: Cholinesterase (141 aa).

Asparagine 39 carries N-linked (GlcNAc...) asparagine glycosylation. Glycine 49–glycine 50 contacts substrate. The active-site Acyl-ester intermediate is serine 131. Serine 131 carries the phosphoserine modification.

Belongs to the type-B carboxylesterase/lipase family. Homotetramer; disulfide-linked. Dimer of dimers. Present in most cells except erythrocytes.

Its subcellular location is the secreted. It carries out the reaction an acylcholine + H2O = a carboxylate + choline + H(+). In terms of biological role, esterase with broad substrate specificity. Contributes to the inactivation of the neurotransmitter acetylcholine. Can degrade neurotoxic organophosphate esters. This chain is Cholinesterase (BCHE), found in Macaca mulatta (Rhesus macaque).